Reading from the N-terminus, the 403-residue chain is L-cysteine:1D-myo-inositol 2-amino-2-deoxy-alpha-D-glucopyranoside ligase (403 aa).

C43 lines the Zn(2+) pocket. Residues 43-46 (CGIT), T58, 81-83 (NVT), and W223 each bind L-cysteinyl-5'-AMP. A 'HIGH' region motif is present at residues 45 to 55 (ITPYDATHLGH). C227 serves as a coordination point for Zn(2+). 245 to 247 (GAD) contributes to the L-cysteinyl-5'-AMP binding site. H252 is a Zn(2+) binding site. V278 contributes to the L-cysteinyl-5'-AMP binding site. The 'KMSKS' region signature appears at 284–288 (KMSKS).

Belongs to the class-I aminoacyl-tRNA synthetase family. MshC subfamily. In terms of assembly, monomer. The cofactor is Zn(2+).

The catalysed reaction is 1D-myo-inositol 2-amino-2-deoxy-alpha-D-glucopyranoside + L-cysteine + ATP = 1D-myo-inositol 2-(L-cysteinylamino)-2-deoxy-alpha-D-glucopyranoside + AMP + diphosphate + H(+). In terms of biological role, catalyzes the ATP-dependent condensation of GlcN-Ins and L-cysteine to form L-Cys-GlcN-Ins. The sequence is that of L-cysteine:1D-myo-inositol 2-amino-2-deoxy-alpha-D-glucopyranoside ligase from Acidothermus cellulolyticus (strain ATCC 43068 / DSM 8971 / 11B).